Reading from the N-terminus, the 90-residue chain is Arminin 45266 (90 aa).

An N-terminal signal peptide occupies residues 1–20 (MKSASLILFVALVALTYARS). A propeptide spanning residues 21 to 59 (YEDVKEEIKNEVEKEILDDLEEENDELDDNTQEVNDPRA) is cleaved from the precursor. At T87 the chain carries Threonine amide.

This sequence belongs to the arminin family. Expressed in entodermal epithelium along the body column.

It is found in the secreted. The protein localises to the target cell membrane. Its function is as follows. Antimicrobial peptide with a broad-spectrum antimicrobial activity. Keeps its antibacterial activity under a wide range of salt concentrations that mimic physiological conditions of human blood, which is surprising, since Hydra is an obligate freshwater animal with nearly no salt tolerance. Does not affect red blood cells. The protein is Arminin 45266 of Hydra vulgaris (Hydra).